The chain runs to 381 residues: MSISMDAGPGFAALQSWSSQVAAFGNSNQTVVDRVSPEMLHLIDAYWYQFPPMNPLWHALLGFTIGVLGFISMMGNGMVIYIFMTTKNLKTPSNLLVVNLAFSDFLMMCAMSPAMVINCYNETWVFGPFACELYGCAGSLFGCASIWTMTMIAFDRYNVIVKGIAAKPMTNNGALLRILGIWAFSLAWTVAPFFGWNRYVPEGNMTACGTDYLTKDWFSRSYIVVYSVFVYFAPLLLIVYSYYYIVQAVSAHEKAMREQAKKMNVASLRSSEAANTSTECKLAKVALMTISLWFMAWTPYLVINYTGILESAPISPLATIWGSLFAKANAVYNPIVYGISHPKYQAALYKRFPVLQCHSTTTDEASSVASGTTVMEEKPTA.

At 1-62 (MSISMDAGPG…MNPLWHALLG (62 aa)) the chain is on the extracellular side. Asparagine 28 is a glycosylation site (N-linked (GlcNAc...) asparagine). Residues 63 to 83 (FTIGVLGFISMMGNGMVIYIF) traverse the membrane as a helical segment. Residues 84–96 (MTTKNLKTPSNLL) lie on the Cytoplasmic side of the membrane. Residues 97–117 (VVNLAFSDFLMMCAMSPAMVI) form a helical membrane-spanning segment. Residues 118 to 133 (NCYNETWVFGPFACEL) are Extracellular-facing. Asparagine 121 carries an N-linked (GlcNAc...) asparagine glycan. A disulfide bridge links cysteine 131 with cysteine 208. Residues 134 to 154 (YGCAGSLFGCASIWTMTMIAF) form a helical membrane-spanning segment. Residues 155–173 (DRYNVIVKGIAAKPMTNNG) lie on the Cytoplasmic side of the membrane. Residues 174–194 (ALLRILGIWAFSLAWTVAPFF) traverse the membrane as a helical segment. Residues 195 to 221 (GWNRYVPEGNMTACGTDYLTKDWFSRS) lie on the Extracellular side of the membrane. The N-linked (GlcNAc...) asparagine glycan is linked to asparagine 204. Residues 222-242 (YIVVYSVFVYFAPLLLIVYSY) traverse the membrane as a helical segment. At 243–284 (YYIVQAVSAHEKAMREQAKKMNVASLRSSEAANTSTECKLAK) the chain is on the cytoplasmic side. Residues 285 to 305 (VALMTISLWFMAWTPYLVINY) form a helical membrane-spanning segment. The Extracellular portion of the chain corresponds to 306 to 316 (TGILESAPISP). Residues 317 to 339 (LATIWGSLFAKANAVYNPIVYGI) traverse the membrane as a helical segment. At 340 to 381 (SHPKYQAALYKRFPVLQCHSTTTDEASSVASGTTVMEEKPTA) the chain is on the cytoplasmic side.

Belongs to the G-protein coupled receptor 1 family. Opsin subfamily. As to expression, expressed bilaterally in dorsal and ventral anterior protocerebral cells and bilaterally in the dorsal posterior protocerebral and lateral posterior tritocerebral cells (at protein level). Expressed in the larval brain but not in the subesophageal ganglion or thoracic ganglion.

It is found in the membrane. In terms of biological role, visual pigments are the light-absorbing molecules that mediate vision. They consist of an apoprotein, opsin, covalently linked to cis-retinal. May play a role in photoperiodic photoreception. This chain is Ceropsin, found in Bombyx mori (Silk moth).